The chain runs to 283 residues: Small ribosomal subunit protein uS3 (283 aa).

Residues 39–107 (VRAYLKTKLK…PVHVNIEEIR (69 aa)) enclose the KH type-2 domain. The interval 209–283 (PSGEPPVDLT…GAVPAEKAGE (75 aa)) is disordered. The segment covering 217 to 235 (LTKEDDTKRRGPRRDDGKP) has biased composition (basic and acidic residues). A compositionally biased stretch (low complexity) spans 244–260 (PEGQPGAAAAPGAAPAA).

The protein belongs to the universal ribosomal protein uS3 family. Part of the 30S ribosomal subunit. Forms a tight complex with proteins S10 and S14.

Functionally, binds the lower part of the 30S subunit head. Binds mRNA in the 70S ribosome, positioning it for translation. This is Small ribosomal subunit protein uS3 from Herminiimonas arsenicoxydans.